Here is a 235-residue protein sequence, read N- to C-terminus: Purine nucleoside phosphorylase DeoD-type (235 aa).

H4 lines the a purine D-ribonucleoside pocket. Phosphate is bound by residues G20, R24, R43, and 87 to 90 (RVGT). Residues E162, 179-181 (EME), and 203-204 (SD) each bind a purine D-ribonucleoside. D204 acts as the Proton donor in catalysis.

Belongs to the PNP/UDP phosphorylase family. In terms of assembly, homohexamer; trimer of homodimers.

It catalyses the reaction a purine D-ribonucleoside + phosphate = a purine nucleobase + alpha-D-ribose 1-phosphate. The enzyme catalyses a purine 2'-deoxy-D-ribonucleoside + phosphate = a purine nucleobase + 2-deoxy-alpha-D-ribose 1-phosphate. In terms of biological role, catalyzes the reversible phosphorolytic breakdown of the N-glycosidic bond in the beta-(deoxy)ribonucleoside molecules, with the formation of the corresponding free purine bases and pentose-1-phosphate. This is Purine nucleoside phosphorylase DeoD-type from Bacillus anthracis (strain CDC 684 / NRRL 3495).